Consider the following 392-residue polypeptide: Tryptophan synthase beta chain 1 (392 aa).

K85 bears the N6-(pyridoxal phosphate)lysine mark.

The protein belongs to the TrpB family. As to quaternary structure, tetramer of two alpha and two beta chains. Requires pyridoxal 5'-phosphate as cofactor.

It carries out the reaction (1S,2R)-1-C-(indol-3-yl)glycerol 3-phosphate + L-serine = D-glyceraldehyde 3-phosphate + L-tryptophan + H2O. It participates in amino-acid biosynthesis; L-tryptophan biosynthesis; L-tryptophan from chorismate: step 5/5. In terms of biological role, the beta subunit is responsible for the synthesis of L-tryptophan from indole and L-serine. The protein is Tryptophan synthase beta chain 1 (trpB1) of Methanothermobacter thermautotrophicus (strain ATCC 29096 / DSM 1053 / JCM 10044 / NBRC 100330 / Delta H) (Methanobacterium thermoautotrophicum).